We begin with the raw amino-acid sequence, 319 residues long: Taste receptor type 2 member 7 (319 aa).

At M1–L9 the chain is on the extracellular side. The helical transmembrane segment at L10–V30 threads the bilayer. Residues N31–R55 are Cytoplasmic-facing. A helical membrane pass occupies residues I56–Y76. The Extracellular portion of the chain corresponds to A77–H94. Residues L95–F115 form a helical membrane-spanning segment. The Cytoplasmic portion of the chain corresponds to H116–R128. A helical transmembrane segment spans residues V129 to T149. Residues E150–N187 are Extracellular-facing. N-linked (GlcNAc...) asparagine glycans are attached at residues N167 and N175. Residues L188–L208 form a helical membrane-spanning segment. The Cytoplasmic portion of the chain corresponds to R209–K235. The helical transmembrane segment at A236–S256 threads the bilayer. The Extracellular segment spans residues S257–A266. A helical membrane pass occupies residues V267–L287. Residues G288–G319 lie on the Cytoplasmic side of the membrane.

Belongs to the G-protein coupled receptor T2R family.

The protein resides in the membrane. Functionally, gustducin-coupled receptor implicated in the perception of bitter compounds in the oral cavity and the gastrointestinal tract. Signals through PLCB2 and the calcium-regulated cation channel TRPM5. This Pan troglodytes (Chimpanzee) protein is Taste receptor type 2 member 7 (TAS2R7).